The primary structure comprises 236 residues: 2,3,4,5-tetrahydropyridine-2,6-dicarboxylate N-acetyltransferase (236 aa).

The protein belongs to the transferase hexapeptide repeat family. DapH subfamily.

The catalysed reaction is (S)-2,3,4,5-tetrahydrodipicolinate + acetyl-CoA + H2O = L-2-acetamido-6-oxoheptanedioate + CoA. It functions in the pathway amino-acid biosynthesis; L-lysine biosynthesis via DAP pathway; LL-2,6-diaminopimelate from (S)-tetrahydrodipicolinate (acetylase route): step 1/3. Its function is as follows. Catalyzes the transfer of an acetyl group from acetyl-CoA to tetrahydrodipicolinate. In Listeria innocua serovar 6a (strain ATCC BAA-680 / CLIP 11262), this protein is 2,3,4,5-tetrahydropyridine-2,6-dicarboxylate N-acetyltransferase.